The chain runs to 188 residues: MNKTASCELLLFVSGEAGLTLAELSALTEMSKQACQQQIDYLKEKYHSDEESALTIIETAGKYRMATKEEFAEILKNYAKTPLNQSLSKSALEVLSIIAYKQPLTRLEIDHLRGVNSSGVLSTLRAFDLVEKVGQVEAPGRPSLYATTDFFLDYIGINHLDELPEIDESRFIAEEQTLFNESEENENQ.

This sequence belongs to the ScpB family. In terms of assembly, homodimer. Homodimerization may be required to stabilize the binding of ScpA to the Smc head domains. Component of a cohesin-like complex composed of ScpA, ScpB and the Smc homodimer, in which ScpA and ScpB bind to the head domain of Smc. The presence of the three proteins is required for the association of the complex with DNA.

It localises to the cytoplasm. Its function is as follows. Participates in chromosomal partition during cell division. May act via the formation of a condensin-like complex containing Smc and ScpA that pull DNA away from mid-cell into both cell halves. This is Segregation and condensation protein B from Lactococcus lactis subsp. lactis (strain IL1403) (Streptococcus lactis).